A 345-amino-acid polypeptide reads, in one-letter code: MSTPTPLSYKDAGVDIDAGNALVSNIKAAVKRTRRPEVMGNLGGFGALCEIPTKYKQPVLVSGTDGVGTKLRLAIDYKKHDTVGIDLVAMCVNDLIVQGAEPLFFLDYYATGKLDVETATSVVNGIGEGCFQSGCALIGGETAEMPGMYEGEDYDLAGFCVGVVEKADIIDGSKVAAGDALIALASSGPHSNGYSLVRKVLEVSQADPQQDLNGKPLIEHLLEPTKIYVKSLLKLIAASDVHAMAHITGGGFWENIPRVLPDNLKAVIQGDSWQWPAVFSWLMENGNIAEYEMYRTFNCGVGMLVALPADKVDAALSLLAAEGEQAWLIGAIADREGNEEQVEIL.

It belongs to the AIR synthase family.

It is found in the cytoplasm. It catalyses the reaction 2-formamido-N(1)-(5-O-phospho-beta-D-ribosyl)acetamidine + ATP = 5-amino-1-(5-phospho-beta-D-ribosyl)imidazole + ADP + phosphate + H(+). It functions in the pathway purine metabolism; IMP biosynthesis via de novo pathway; 5-amino-1-(5-phospho-D-ribosyl)imidazole from N(2)-formyl-N(1)-(5-phospho-D-ribosyl)glycinamide: step 2/2. The chain is Phosphoribosylformylglycinamidine cyclo-ligase from Shewanella baltica (strain OS185).